Consider the following 188-residue polypeptide: SAYSvFN domain-containing protein 1 (188 aa).

Basic and acidic residues predominate over residues 1 to 10 (MEQRLAEFRE). Disordered stretches follow at residues 1–43 (MEQR…ATPK) and 60–80 (AIAQAQPNQPQEAGQQLPEST). At 1 to 100 (MEQRLAEFRE…SFLTNITFLK (100 aa)) the chain is on the cytoplasmic side. 2 stretches are compositionally biased toward low complexity: residues 22–43 (STSSQSVQTSGAKAEPAAATPK) and 60–75 (AIAQAQPNQPQEAGQQ). A middle helical (MH) region spans residues 86–100 (SSCRQSFLTNITFLK). The segment at residues 101-121 (VLLWLVLLGLFVELEFGLAYF) is an intramembrane region (helical). Over 122-188 (VLSMFYWMYV…RTSPSCSSYP (67 aa)) the chain is Cytoplasmic.

The protein belongs to the SAYSD1 family. As to quaternary structure, associates (via N-terminus) with ribosomes. In terms of tissue distribution, enriched in testis; predominantly expressed in round and elongating spermatids.

The protein localises to the endoplasmic reticulum membrane. It is found in the cytoplasmic vesicle membrane. In terms of biological role, ufmylation 'reader' component of a translocation-associated quality control pathway, a mechanism that takes place when a ribosome has stalled during translation, and which is required to degrade clogged substrates. Specifically recognizes and binds ufmylated ribosomes when a ribosome has stalled, promoting the transport of stalled nascent chain via the TRAPP complex to lysosomes for degradation. The chain is SAYSvFN domain-containing protein 1 from Mus musculus (Mouse).